The following is a 236-amino-acid chain: Small ribosomal subunit protein uS5 (236 aa).

The S5 DRBM domain occupies 61–124 (ENQEVLDIAL…NYAKLNIIEI (64 aa)).

The protein belongs to the universal ribosomal protein uS5 family. As to quaternary structure, part of the 30S ribosomal subunit. Contacts protein S4.

With S4 and S12 plays an important role in translational accuracy. In Pyrococcus furiosus (strain ATCC 43587 / DSM 3638 / JCM 8422 / Vc1), this protein is Small ribosomal subunit protein uS5.